Reading from the N-terminus, the 475-residue chain is Dynein regulatory complex subunit 4 (475 aa).

Residues 1–22 (MPPKRKSSPKGKTPTVVDGLST) form a disordered region. The regulates microtubule-binding stretch occupies residues 1-113 (MPPKRKSSPK…LLYEQQNMLS (113 aa)). Coiled coils occupy residues 20-104 (LSTE…VKHL), 142-200 (RSLK…QEEE), and 242-426 (KNLD…VARV). The tract at residues 114–257 (ELKAESIIST…TSLKEELKEM (144 aa)) is microtubule-binding.

Belongs to the DRC4 family. In terms of assembly, component of the nexin-dynein regulatory complex (N-DRC). Interacts with microtubules.

The protein localises to the cytoplasm. The protein resides in the cytoskeleton. Its subcellular location is the cell projection. It is found in the cilium. It localises to the flagellum. The protein localises to the cilium axoneme. The protein resides in the cilium basal body. Its subcellular location is the golgi apparatus. It is found in the flagellum axoneme. Component of the nexin-dynein regulatory complex (N-DRC), a key regulator of ciliary/flagellar motility which maintains the alignment and integrity of the distal axoneme and regulates microtubule sliding in motile axonemes. Plays an important role in the assembly of the N-DRC linker. Plays dual roles at both the primary (or non-motile) cilia to regulate hedgehog signaling and in motile cilia to coordinate cilia movement. Required for proper slow muscle development and positively regulates ciliary smoothened (SMO)-dependent Hedgehog (Hh) signaling pathway. Required for tether cilia motility which is essential for normal otolith formation and localization in the developing inner ear. This chain is Dynein regulatory complex subunit 4 (gas8), found in Danio rerio (Zebrafish).